Here is a 503-residue protein sequence, read N- to C-terminus: DEAD-box ATP-dependent RNA helicase CshA (503 aa).

The short motif at 2-30 is the Q motif element; it reads QNFKELGISDKTVETLEAMGFKEPTPIQK. One can recognise a Helicase ATP-binding domain in the interval 33 to 203; sequence IPYTLEGKDI…QQFMKSPQIV (171 aa). 46–53 provides a ligand contact to ATP; that stretch reads AQTGTGKT. Positions 150-153 match the DEAD box motif; sequence DEAD. The Helicase C-terminal domain maps to 214-375; sequence QIDEYYTIVK…LRPPHRKEVL (162 aa). Residues 436–503 are disordered; sequence EKPLARKNRQ…KGRTFADLQK (68 aa). The span at 466–480 shows a compositional bias: basic residues; it reads KRSKGNFNKKKGKKT. Positions 481–490 are enriched in basic and acidic residues; the sequence is DRRERQDKGR.

The protein belongs to the DEAD box helicase family. CshA subfamily. In terms of assembly, oligomerizes, may be a member of the RNA degradosome.

The protein resides in the cytoplasm. It catalyses the reaction ATP + H2O = ADP + phosphate + H(+). DEAD-box RNA helicase possibly involved in RNA degradation. Unwinds dsRNA in both 5'- and 3'-directions, has RNA-dependent ATPase activity. The chain is DEAD-box ATP-dependent RNA helicase CshA from Staphylococcus haemolyticus (strain JCSC1435).